The chain runs to 142 residues: 3-hydroxyacyl-[acyl-carrier-protein] dehydratase FabZ (142 aa).

Residue His41 is part of the active site.

It belongs to the thioester dehydratase family. FabZ subfamily.

The protein resides in the cytoplasm. It carries out the reaction a (3R)-hydroxyacyl-[ACP] = a (2E)-enoyl-[ACP] + H2O. In terms of biological role, involved in unsaturated fatty acids biosynthesis. Catalyzes the dehydration of short chain beta-hydroxyacyl-ACPs and long chain saturated and unsaturated beta-hydroxyacyl-ACPs. In Symbiobacterium thermophilum (strain DSM 24528 / JCM 14929 / IAM 14863 / T), this protein is 3-hydroxyacyl-[acyl-carrier-protein] dehydratase FabZ.